A 235-amino-acid polypeptide reads, in one-letter code: Aspartate/glutamate leucyltransferase (235 aa).

This sequence belongs to the R-transferase family. Bpt subfamily.

It is found in the cytoplasm. The catalysed reaction is N-terminal L-glutamyl-[protein] + L-leucyl-tRNA(Leu) = N-terminal L-leucyl-L-glutamyl-[protein] + tRNA(Leu) + H(+). It carries out the reaction N-terminal L-aspartyl-[protein] + L-leucyl-tRNA(Leu) = N-terminal L-leucyl-L-aspartyl-[protein] + tRNA(Leu) + H(+). Its function is as follows. Functions in the N-end rule pathway of protein degradation where it conjugates Leu from its aminoacyl-tRNA to the N-termini of proteins containing an N-terminal aspartate or glutamate. The chain is Aspartate/glutamate leucyltransferase from Pseudomonas putida (strain ATCC 700007 / DSM 6899 / JCM 31910 / BCRC 17059 / LMG 24140 / F1).